A 101-amino-acid chain; its full sequence is Small ribosomal subunit protein uS14 (101 aa).

Belongs to the universal ribosomal protein uS14 family. Part of the 30S ribosomal subunit. Contacts proteins S3 and S10.

Functionally, binds 16S rRNA, required for the assembly of 30S particles and may also be responsible for determining the conformation of the 16S rRNA at the A site. The sequence is that of Small ribosomal subunit protein uS14 from Psychrobacter arcticus (strain DSM 17307 / VKM B-2377 / 273-4).